We begin with the raw amino-acid sequence, 150 residues long: Small ribosomal subunit protein uS11y (150 aa).

The residue at position 19 (serine 19) is a Phosphoserine.

It belongs to the universal ribosomal protein uS11 family.

The protein resides in the cytoplasm. The protein is Small ribosomal subunit protein uS11y (RPS14B) of Arabidopsis thaliana (Mouse-ear cress).